The chain runs to 491 residues: MTDKKPTIEPGWNFDNSYTTLPKSFFSRLNPPPVRSPKLAILNERLAKSLGLNVEALQSEEVIAMLAGNKTPEGAMPLAQAYAGHQFGHFTMLGDGRALLLGEQITPTGERFDIQLKGSGRTPYSRGGDGRAALGPMLREYIISEAMHGLGIPTTRSLAVVTTGESVYRESELPGAILTRVAASHIRVGTFQFAARFCSIEDLRALADYTLQRHFPEIETEENRYLLLLKGVIQRQAALIAKWQLVGFIHGVMNTDNMAISGETIDYGPCAFMDTYDPATVFSSIDVQGRYAYGNQPYIAVWNLSRFAESLLPLLHENEAQAVKIAEDVLAEFSKLYHSNWLTGMRAKLGLFNEEEQDEALIEGLLNMMKEHRADYTNTFRALTLNQPEETVLFGTSEFTEWHEQWKARLTRQPEDTDAVQQGMKKNNPAVIPRNHRVEEALEAAWKEGDYTVMERLLTVLSDPYAYTPEQVEYTTLPAESARPYQTFCGT.

ATP contacts are provided by G94, G96, R97, K117, D129, G130, R180, and R187. D256 functions as the Proton acceptor in the catalytic mechanism. Positions 257 and 266 each coordinate Mg(2+). Residue D266 participates in ATP binding.

The protein belongs to the SELO family. It depends on Mg(2+) as a cofactor. The cofactor is Mn(2+).

The catalysed reaction is L-seryl-[protein] + ATP = 3-O-(5'-adenylyl)-L-seryl-[protein] + diphosphate. It carries out the reaction L-threonyl-[protein] + ATP = 3-O-(5'-adenylyl)-L-threonyl-[protein] + diphosphate. The enzyme catalyses L-tyrosyl-[protein] + ATP = O-(5'-adenylyl)-L-tyrosyl-[protein] + diphosphate. It catalyses the reaction L-histidyl-[protein] + UTP = N(tele)-(5'-uridylyl)-L-histidyl-[protein] + diphosphate. The catalysed reaction is L-seryl-[protein] + UTP = O-(5'-uridylyl)-L-seryl-[protein] + diphosphate. It carries out the reaction L-tyrosyl-[protein] + UTP = O-(5'-uridylyl)-L-tyrosyl-[protein] + diphosphate. In terms of biological role, nucleotidyltransferase involved in the post-translational modification of proteins. It can catalyze the addition of adenosine monophosphate (AMP) or uridine monophosphate (UMP) to a protein, resulting in modifications known as AMPylation and UMPylation. This chain is Protein nucleotidyltransferase YdiU, found in Brevibacillus brevis (strain 47 / JCM 6285 / NBRC 100599).